A 158-amino-acid chain; its full sequence is SsrA-binding protein (158 aa).

This sequence belongs to the SmpB family.

The protein resides in the cytoplasm. Functionally, required for rescue of stalled ribosomes mediated by trans-translation. Binds to transfer-messenger RNA (tmRNA), required for stable association of tmRNA with ribosomes. tmRNA and SmpB together mimic tRNA shape, replacing the anticodon stem-loop with SmpB. tmRNA is encoded by the ssrA gene; the 2 termini fold to resemble tRNA(Ala) and it encodes a 'tag peptide', a short internal open reading frame. During trans-translation Ala-aminoacylated tmRNA acts like a tRNA, entering the A-site of stalled ribosomes, displacing the stalled mRNA. The ribosome then switches to translate the ORF on the tmRNA; the nascent peptide is terminated with the 'tag peptide' encoded by the tmRNA and targeted for degradation. The ribosome is freed to recommence translation, which seems to be the essential function of trans-translation. The protein is SsrA-binding protein of Bartonella henselae (strain ATCC 49882 / DSM 28221 / CCUG 30454 / Houston 1) (Rochalimaea henselae).